A 318-amino-acid polypeptide reads, in one-letter code: Formimidoylglutamase (318 aa).

Residues His-130, Asp-155, His-157, Asp-159, Asp-246, and Asp-248 each coordinate Mn(2+).

It belongs to the arginase family. Mn(2+) serves as cofactor.

It carries out the reaction N-formimidoyl-L-glutamate + H2O = formamide + L-glutamate. The protein operates within amino-acid degradation; L-histidine degradation into L-glutamate; L-glutamate from N-formimidoyl-L-glutamate (hydrolase route): step 1/1. In terms of biological role, catalyzes the conversion of N-formimidoyl-L-glutamate to L-glutamate and formamide. The sequence is that of Formimidoylglutamase from Klebsiella pneumoniae (strain 342).